The chain runs to 401 residues: Probable tRNA sulfurtransferase (401 aa).

The THUMP domain occupies 60–165; that stretch reads EPIIDKLKNV…QEGTYITCHD (106 aa). ATP is bound by residues 183-184, 208-209, Arg-265, Gly-287, and Gln-296; these read ML and HF.

It belongs to the ThiI family.

The protein localises to the cytoplasm. The enzyme catalyses [ThiI sulfur-carrier protein]-S-sulfanyl-L-cysteine + a uridine in tRNA + 2 reduced [2Fe-2S]-[ferredoxin] + ATP + H(+) = [ThiI sulfur-carrier protein]-L-cysteine + a 4-thiouridine in tRNA + 2 oxidized [2Fe-2S]-[ferredoxin] + AMP + diphosphate. The catalysed reaction is [ThiS sulfur-carrier protein]-C-terminal Gly-Gly-AMP + S-sulfanyl-L-cysteinyl-[cysteine desulfurase] + AH2 = [ThiS sulfur-carrier protein]-C-terminal-Gly-aminoethanethioate + L-cysteinyl-[cysteine desulfurase] + A + AMP + 2 H(+). Its pathway is cofactor biosynthesis; thiamine diphosphate biosynthesis. In terms of biological role, catalyzes the ATP-dependent transfer of a sulfur to tRNA to produce 4-thiouridine in position 8 of tRNAs, which functions as a near-UV photosensor. Also catalyzes the transfer of sulfur to the sulfur carrier protein ThiS, forming ThiS-thiocarboxylate. This is a step in the synthesis of thiazole, in the thiamine biosynthesis pathway. The sulfur is donated as persulfide by IscS. The protein is Probable tRNA sulfurtransferase of Geobacillus sp. (strain WCH70).